A 339-amino-acid chain; its full sequence is Transposase for insertion sequence element IS1086 (339 aa).

Positions 176–329 (DRLMPGHWEG…SPLQVLAQVL (154 aa)) constitute an Integrase catalytic domain.

Belongs to the transposase IS30 family.

Functionally, required for the transposition of the insertion element. This Cupriavidus metallidurans (strain ATCC 43123 / DSM 2839 / NBRC 102507 / CH34) (Ralstonia metallidurans) protein is Transposase for insertion sequence element IS1086 (IS1086).